The chain runs to 409 residues: Sex-determination protein fem-3 (409 aa).

In terms of assembly, component of a complex containing fem-1, fem-2 and fem-3. Interacts with fem-1 and fem-2 (via N-terminus). Part of a E3 ubiquitin-protein ligase complex, at least composed of cul-2, elc-1, tra-1, fem-1, fem-2 and fem-3; mediates the ubiquitination and subsequent proteasomal degradation of tra-1. Interacts with sel-10. Interacts with tra-2.

In terms of biological role, required for male development. In XO (male) animals, fem-3 directs male differentiation in all tissues. In XX (hermaphrodite animals), it specifies the first 80 or so germ cells to be sperm. Negatively regulates male development when bound to tra-2. The polypeptide is Sex-determination protein fem-3 (Caenorhabditis briggsae).